We begin with the raw amino-acid sequence, 362 residues long: Probable dual-specificity RNA methyltransferase RlmN (362 aa).

E105 acts as the Proton acceptor in catalysis. One can recognise a Radical SAM core domain in the interval 111–344 (HEYGNSICVT…VTIRREQGHD (234 aa)). A disulfide bond links C118 and C349. Residues C125, C129, and C132 each contribute to the [4Fe-4S] cluster site. S-adenosyl-L-methionine is bound by residues 175–176 (GE), S207, 230–232 (SLH), and N306. The S-methylcysteine intermediate role is filled by C349.

Belongs to the radical SAM superfamily. RlmN family. Requires [4Fe-4S] cluster as cofactor.

Its subcellular location is the cytoplasm. The enzyme catalyses adenosine(2503) in 23S rRNA + 2 reduced [2Fe-2S]-[ferredoxin] + 2 S-adenosyl-L-methionine = 2-methyladenosine(2503) in 23S rRNA + 5'-deoxyadenosine + L-methionine + 2 oxidized [2Fe-2S]-[ferredoxin] + S-adenosyl-L-homocysteine. It catalyses the reaction adenosine(37) in tRNA + 2 reduced [2Fe-2S]-[ferredoxin] + 2 S-adenosyl-L-methionine = 2-methyladenosine(37) in tRNA + 5'-deoxyadenosine + L-methionine + 2 oxidized [2Fe-2S]-[ferredoxin] + S-adenosyl-L-homocysteine. Functionally, specifically methylates position 2 of adenine 2503 in 23S rRNA and position 2 of adenine 37 in tRNAs. This Bacillus mycoides (strain KBAB4) (Bacillus weihenstephanensis) protein is Probable dual-specificity RNA methyltransferase RlmN.